Here is a 454-residue protein sequence, read N- to C-terminus: Protein IQ-DOMAIN 1 (454 aa).

A calmodulin-binding region spans residues 103–113 (GKSKEEAAAIL). In terms of domain architecture, IQ spans 107-136 (EEAAAILIQSTFRGHLARRESQVMRGQERL). A disordered region spans residues 272-454 (WESSEKEQNT…KGVLKAERTP (183 aa)). Positions 280–328 (NTTNNDNSSVKNSTNRNSQGGETAKSSNRNKLNSSTKPNTPSASSTATR) are enriched in polar residues. Residues 343–356 (KSSDDEAKSSERNR) are compositionally biased toward basic and acidic residues. Positions 371–388 (LSSSTARRSSNLIPTTKS) are enriched in polar residues. A compositionally biased stretch (low complexity) spans 397–412 (TSSRVAVTTSTTEESS). A Nuclear localization signal motif is present at residues 421–428 (KKRLSTSA). The segment covering 442–454 (KVEKGVLKAERTP) has biased composition (basic and acidic residues).

It belongs to the IQD family. As to quaternary structure, binds to multiple calmodulin (CaM) in the presence of Ca(2+)(e.g. CaM1 and CaM2) and CaM-like (e.g. CML8 and CML9) proteins. Interacts with KLCR1. Expressed in roots, flowers, stems, siliques, inflorescence stems and whole shoots. Restricted to the vascular bundles.

It localises to the nucleus. Its subcellular location is the nucleolus. The protein resides in the cytoplasm. The protein localises to the cytoskeleton. Its function is as follows. May be involved in cooperative interactions with calmodulins or calmodulin-like proteins. Modulates expression of glucosinolate pathway genes. May associate with nucleic acids and regulate gene expression at the transcriptional or post-transcriptional level. Recruits KLCR1 and calmodulin proteins to microtubules, thus being a potential scaffold in cellular signaling and trafficking. This is Protein IQ-DOMAIN 1 from Arabidopsis thaliana (Mouse-ear cress).